The chain runs to 293 residues: N-acetylneuraminate lyase (293 aa).

Positions 48 and 49 each coordinate aceneuramate. The Proton donor role is filled by Tyr137. Residue Lys165 is the Schiff-base intermediate with substrate of the active site. 5 residues coordinate aceneuramate: Thr167, Gly189, Asp191, Glu192, and Ser208.

It belongs to the DapA family. NanA subfamily. As to quaternary structure, homotetramer.

It is found in the cytoplasm. The catalysed reaction is aceneuramate = aldehydo-N-acetyl-D-mannosamine + pyruvate. It participates in amino-sugar metabolism; N-acetylneuraminate degradation; D-fructose 6-phosphate from N-acetylneuraminate: step 1/5. In terms of biological role, catalyzes the reversible aldol cleavage of N-acetylneuraminic acid (sialic acid; Neu5Ac) to form pyruvate and N-acetylmannosamine (ManNAc) via a Schiff base intermediate. This chain is N-acetylneuraminate lyase, found in Staphylococcus carnosus (strain TM300).